The sequence spans 878 residues: Alanine--tRNA ligase (878 aa).

Zn(2+) contacts are provided by His-571, His-575, Cys-673, and His-677.

The protein belongs to the class-II aminoacyl-tRNA synthetase family. Requires Zn(2+) as cofactor.

Its subcellular location is the cytoplasm. The enzyme catalyses tRNA(Ala) + L-alanine + ATP = L-alanyl-tRNA(Ala) + AMP + diphosphate. In terms of biological role, catalyzes the attachment of alanine to tRNA(Ala) in a two-step reaction: alanine is first activated by ATP to form Ala-AMP and then transferred to the acceptor end of tRNA(Ala). Also edits incorrectly charged Ser-tRNA(Ala) and Gly-tRNA(Ala) via its editing domain. In Syntrophus aciditrophicus (strain SB), this protein is Alanine--tRNA ligase.